The sequence spans 176 residues: LFYRYQDCTFFNKKDILKLHARFYELAPNLVPMDYRKSPIVHVPMSLIIQMPELRENPFKERIVEAFSEDGEGNLTFNDFVDMFSVLCESAPRDLKASYAFKIYDFNTDNFICKEDLQLTLARLTKSELDEDEVVLVCDKVIEEADLDGDGKLGFADFEDMIAKAPDFLSTFHIRI.

EF-hand domains follow at residues 55 to 90 (RENP…LCES), 92 to 127 (PRDL…LTKS), and 133 to 168 (EVVL…APDF). Residues Asp-105, Asn-107, Asp-109, Asp-116, Asp-146, Asp-148, Asp-150, Lys-152, and Asp-157 each coordinate Ca(2+).

In terms of assembly, monomer. Homodimer. Interacts with WHRN and MYO7A. Interacts with ITGA2B (via C-terminus cytoplasmic tail region); the interactions are stabilized/increased in a calcium and magnesium-dependent manner. Interacts with ITGA7 (via C-terminus cytoplasmic tail region); the interactions are stabilized/increased in a calcium and magnesium-dependent manner. Interacts with TMC1. Interacts with TMC2. Expressed in liver, heart, kidney, brain, spleen, stomach, ovary, testis and muscle.

Its subcellular location is the cytoplasm. It is found in the cell projection. The protein localises to the stereocilium. It localises to the photoreceptor inner segment. The protein resides in the cilium. Its subcellular location is the photoreceptor outer segment. It is found in the cell membrane. The protein localises to the sarcolemma. Calcium- and integrin-binding protein that plays a role in intracellular calcium homeostasis. Acts as an auxiliary subunit of the sensory mechanoelectrical transduction (MET) channel in hair cells. Essential for mechanoelectrical transduction (MET) currents in auditory hair cells and thereby required for hearing. Regulates the function of hair cell mechanotransduction by controlling the distribution of transmembrane channel-like proteins TMC1 and TMC2, and by regulating the function of the MET channels in hair cells. Required for the maintenance of auditory hair cell stereocilia bundle morphology and function and for hair-cell survival in the cochlea. Critical for proper photoreceptor cell maintenance and function. Plays a role in intracellular calcium homeostasis by decreasing ATP-induced calcium release. The chain is Calcium and integrin-binding family member 2 (CIB2) from Ovis aries (Sheep).